A 346-amino-acid polypeptide reads, in one-letter code: Very-long-chain 3-oxoacyl-CoA reductase (346 aa).

A helical transmembrane segment spans residues 23–43 (AAWIVFGLGISKMVFLTLNFS). NADP(+) is bound by residues Val-69, Asp-123, Asn-150, Tyr-222, Lys-226, Val-255, and Ser-257. Residue Tyr-222 is the Proton donor of the active site. Lys-226 acts as the Lowers pKa of active site Tyr in catalysis.

The protein belongs to the short-chain dehydrogenases/reductases (SDR) family.

Its subcellular location is the endoplasmic reticulum membrane. It catalyses the reaction a very-long-chain (3R)-3-hydroxyacyl-CoA + NADP(+) = a very-long-chain 3-oxoacyl-CoA + NADPH + H(+). Its pathway is lipid metabolism; fatty acid biosynthesis. Component of the microsomal membrane bound fatty acid elongation system, which produces the 26-carbon very long-chain fatty acids (VLCFA) from palmitate. Catalyzes the reduction of the 3-ketoacyl-CoA intermediate that is formed in each cycle of fatty acid elongation. VLCFAs serve as precursors for ceramide and sphingolipids. This chain is Very-long-chain 3-oxoacyl-CoA reductase, found in Kluyveromyces lactis (strain ATCC 8585 / CBS 2359 / DSM 70799 / NBRC 1267 / NRRL Y-1140 / WM37) (Yeast).